A 285-amino-acid chain; its full sequence is Flagellar filament core protein flaB2 (285 aa).

It belongs to the bacterial flagellin family. In terms of assembly, the flagellum consists of an outer layer composed of two sheath proteins, flaA1 (44 kDa) and flaA2 (35 kDa) around a core that contains three proteins flaB1 (37 kDa), flaB2 (34 kDa) and flaB3 (32 kDa).

The protein resides in the periplasmic flagellum. It is found in the periplasm. In terms of biological role, component of the core of the flagella. The chain is Flagellar filament core protein flaB2 (flaB2) from Brachyspira hyodysenteriae (Treponema hyodysenteriae).